The following is a 418-amino-acid chain: UDP-N-acetylglucosamine 1-carboxyvinyltransferase (418 aa).

22 to 23 is a phosphoenolpyruvate binding site; the sequence is KN. UDP-N-acetyl-alpha-D-glucosamine is bound at residue Arg-92. The active-site Proton donor is the Cys-116. A 2-(S-cysteinyl)pyruvic acid O-phosphothioketal modification is found at Cys-116. Asp-306 and Ile-328 together coordinate UDP-N-acetyl-alpha-D-glucosamine.

Belongs to the EPSP synthase family. MurA subfamily.

The protein resides in the cytoplasm. It carries out the reaction phosphoenolpyruvate + UDP-N-acetyl-alpha-D-glucosamine = UDP-N-acetyl-3-O-(1-carboxyvinyl)-alpha-D-glucosamine + phosphate. It participates in cell wall biogenesis; peptidoglycan biosynthesis. Cell wall formation. Adds enolpyruvyl to UDP-N-acetylglucosamine. In Shewanella amazonensis (strain ATCC BAA-1098 / SB2B), this protein is UDP-N-acetylglucosamine 1-carboxyvinyltransferase.